The chain runs to 294 residues: Acetyl-coenzyme A carboxylase carboxyl transferase subunit beta (294 aa).

The region spanning 30 to 294 (IMTKCPECKK…PEAGGESDGE (265 aa)) is the CoA carboxyltransferase N-terminal domain. Positions 34, 37, 53, and 56 each coordinate Zn(2+). The C4-type zinc-finger motif lies at 34–56 (CPECKKIMYTKELQKNLMVCNYC).

The protein belongs to the AccD/PCCB family. In terms of assembly, acetyl-CoA carboxylase is a heterohexamer composed of biotin carboxyl carrier protein (AccB), biotin carboxylase (AccC) and two subunits each of ACCase subunit alpha (AccA) and ACCase subunit beta (AccD). Zn(2+) serves as cofactor.

It is found in the cytoplasm. The catalysed reaction is N(6)-carboxybiotinyl-L-lysyl-[protein] + acetyl-CoA = N(6)-biotinyl-L-lysyl-[protein] + malonyl-CoA. Its pathway is lipid metabolism; malonyl-CoA biosynthesis; malonyl-CoA from acetyl-CoA: step 1/1. Its function is as follows. Component of the acetyl coenzyme A carboxylase (ACC) complex. Biotin carboxylase (BC) catalyzes the carboxylation of biotin on its carrier protein (BCCP) and then the CO(2) group is transferred by the transcarboxylase to acetyl-CoA to form malonyl-CoA. This Listeria innocua serovar 6a (strain ATCC BAA-680 / CLIP 11262) protein is Acetyl-coenzyme A carboxylase carboxyl transferase subunit beta.